The following is a 201-amino-acid chain: Guanylyl cyclase-activating protein 1 (201 aa).

The N-myristoyl glycine moiety is linked to residue Gly2. Residue Asn3 is modified to Deamidated asparagine. 4 consecutive EF-hand domains span residues 31–49 (SGQLTLYEFRQFFGLKNLS), 51–86 (SASQYVEQMFETFDFNKDGYIDFMEYVAALSLVLKG), 87–122 (KVEQKLRWYFKLYDVDGNGCIDRDELLTIIQAIRAI), and 131–166 (TAEEFTDTVFSKIDVNGDGELSLEEFIEGVQKDQML). 15 residues coordinate Ca(2+): Asp64, Asn66, Asp68, Tyr70, Glu75, Asp100, Asp102, Asn104, Cys106, Glu111, Asp144, Asn146, Asp148, Glu150, and Glu155.

Homodimer. As to expression, in the retina, it is expressed in rod and cone photoreceptors.

It localises to the membrane. Its subcellular location is the photoreceptor inner segment. The protein resides in the cell projection. It is found in the cilium. The protein localises to the photoreceptor outer segment. Stimulates retinal guanylyl cyclase when free calcium ions concentration is low and inhibits guanylyl cyclase when free calcium ions concentration is elevated. This Ca(2+)-sensitive regulation of retinal guanylyl cyclase is a key event in recovery of the dark state of rod photoreceptors following light exposure. May be involved in cone photoreceptor light response and recovery of response in bright light. This chain is Guanylyl cyclase-activating protein 1 (GUCA1A), found in Homo sapiens (Human).